The following is an 89-amino-acid chain: uncharacterized protein (89 aa).

An N-terminal signal peptide occupies residues 1–19; sequence MQLTKTQFVRCVFLLLANS.

This is an uncharacterized protein from Sulfolobus islandicus filamentous virus (isolate Iceland/Hveragerdi) (SIFV).